We begin with the raw amino-acid sequence, 106 residues long: Large ribosomal subunit protein eL42 (106 aa).

Residues Phe36 to Pro56 are disordered.

This sequence belongs to the eukaryotic ribosomal protein eL42 family.

This Phaffia rhodozyma (Yeast) protein is Large ribosomal subunit protein eL42 (RPL44).